Here is a 327-residue protein sequence, read N- to C-terminus: Probable protein phosphatase 2C 59 (327 aa).

The signal sequence occupies residues 1-24 (MREVLLLGSLVVLALLSLFPCCSC). The PPM-type phosphatase domain maps to 64 to 310 (SYGYASSPGK…DNITCLVVRF (247 aa)). The Mn(2+) site is built by Asp100, Gly101, Asp262, and Asp301.

This sequence belongs to the PP2C family. The cofactor is Mg(2+). Requires Mn(2+) as cofactor.

The enzyme catalyses O-phospho-L-seryl-[protein] + H2O = L-seryl-[protein] + phosphate. It catalyses the reaction O-phospho-L-threonyl-[protein] + H2O = L-threonyl-[protein] + phosphate. The chain is Probable protein phosphatase 2C 59 from Oryza sativa subsp. japonica (Rice).